The sequence spans 590 residues: Negative elongation factor C/D (590 aa).

The segment at 16–43 is disordered; sequence GSAAEWGDEADGGQQEDDSGEGEDDAEV. The span at 21 to 43 shows a compositional bias: acidic residues; sequence WGDEADGGQQEDDSGEGEDDAEV.

This sequence belongs to the NELF-D family. As to quaternary structure, the NELF complex is composed of NELFA, NELFB, NELFCD (isoform NELF-C or isoform NELF-D) and NELFE; NELFA and NELFCD form a stable subcomplex that binds primarily through NELFCD to the N-terminus of NELFB. Binds RNA which may help to stabilize the NELF complex on nucleic acid. In vitro, the NELFA:NELFCD subcomplex binds to ssDNA and ssRNA in a sequence- and structure-dependent manner. Interacts with ARAF. Interacts with PCF11. Interacts with KAT8. As to expression, widely expressed. Expressed in heart, brain, lung, placenta, liver, skeletal and cardiac muscle, adrenal, thyroid, kidney and pancreas.

The protein localises to the nucleus. Its function is as follows. Essential component of the NELF complex, a complex that negatively regulates the elongation of transcription by RNA polymerase II. The NELF complex, which acts via an association with the DSIF complex and causes transcriptional pausing, is counteracted by the P-TEFb kinase complex. In terms of biological role, (Microbial infection) The NELF complex is involved in HIV-1 latency possibly involving recruitment of PCF11 to paused RNA polymerase II. The chain is Negative elongation factor C/D (NELFCD) from Homo sapiens (Human).